Here is a 23-residue protein sequence, read N- to C-terminus: Brevinin-1Eb (23 aa).

A disulfide bridge links Cys17 with Cys23.

The protein belongs to the frog skin active peptide (FSAP) family. Brevinin subfamily. In terms of tissue distribution, expressed by the skin glands.

It localises to the secreted. Its function is as follows. Shows antibacterial activity against representative Gram-negative and Gram-positive bacterial species, and a very high hemolytic activity. This chain is Brevinin-1Eb, found in Pelophylax lessonae (Pool frog).